Reading from the N-terminus, the 406-residue chain is High mobility group nucleosome-binding domain-containing protein 5 (406 aa).

The tract at residues 1 to 406 is disordered; sequence MPKRKAAGDV…GEKEEPLSIV (406 aa). Threonine 29 carries the post-translational modification Phosphothreonine. Residues 35-44 show a composition bias toward basic residues; that stretch reads KRASTSRKTK. 5 stretches are compositionally biased toward basic and acidic residues: residues 63–72, 92–101, 110–126, 136–159, and 166–187; these read TKPEDVKDEC, MEAEEVKEQI, GEKK…DELK, EDGK…EGLN, and KSED…KGED. Lysine 64 is covalently cross-linked (Glycyl lysine isopeptide (Lys-Gly) (interchain with G-Cter in SUMO2)). Lysine 98 is covalently cross-linked (Glycyl lysine isopeptide (Lys-Gly) (interchain with G-Cter in SUMO1); alternate). A Glycyl lysine isopeptide (Lys-Gly) (interchain with G-Cter in SUMO2); alternate cross-link involves residue lysine 98. Lysine 121 participates in a covalent cross-link: Glycyl lysine isopeptide (Lys-Gly) (interchain with G-Cter in SUMO2). The span at 188-200 shows a compositional bias: acidic residues; sequence GKEEGDEKEEEKD. 4 stretches are compositionally biased toward basic and acidic residues: residues 201–239, 246–266, 272–284, and 290–311; these read DKEG…KEGQ, EDLH…KEGQ, KEIH…KEGQ, and KEYL…KEGQ. The span at 312 to 325 shows a compositional bias: acidic residues; that stretch reads PEEDGKEDQPEEDG. Positions 326–365 are enriched in basic and acidic residues; sequence KEGQCKEDGKEGHHEEGGKEDLHEEDGKEKDGGKEDRKEE. The span at 366 to 376 shows a compositional bias: acidic residues; the sequence is GEQEVAVDEGS. Residues 377–406 show a composition bias toward basic and acidic residues; that stretch reads DENKVEAEEEGAENKDFKQDGEKEEPLSIV.

This sequence belongs to the HMGN family. In terms of tissue distribution, expressed in liver, spleen, lung, heart, kidney, muscle and brain (at protein level). Widely expressed with highest levels in submaxillary gland, thymus, kidney and liver and lowest levels in brain, lung, pancreas and eye.

Its subcellular location is the nucleus. Preferentially binds to euchromatin and modulates cellular transcription by counteracting linker histone-mediated chromatin compaction. The sequence is that of High mobility group nucleosome-binding domain-containing protein 5 (Hmgn5) from Mus musculus (Mouse).